The following is a 382-amino-acid chain: Na(+)/H(+) antiporter NhaA (382 aa).

11 helical membrane-spanning segments follow: residues Ile13 to Phe33, Leu58 to Ile78, Leu94 to Phe114, Gly124 to Gly144, Ile153 to Phe173, Ser179 to Phe199, Ile204 to His224, Val256 to Leu276, Val285 to Leu305, Val325 to Leu345, and Met357 to Leu377.

This sequence belongs to the NhaA Na(+)/H(+) (TC 2.A.33) antiporter family.

Its subcellular location is the cell inner membrane. The enzyme catalyses Na(+)(in) + 2 H(+)(out) = Na(+)(out) + 2 H(+)(in). Functionally, na(+)/H(+) antiporter that extrudes sodium in exchange for external protons. This chain is Na(+)/H(+) antiporter NhaA, found in Legionella pneumophila (strain Paris).